The following is a 308-amino-acid chain: Ribosomal RNA large subunit methyltransferase F (308 aa).

The protein belongs to the methyltransferase superfamily. METTL16/RlmF family.

It is found in the cytoplasm. The enzyme catalyses adenosine(1618) in 23S rRNA + S-adenosyl-L-methionine = N(6)-methyladenosine(1618) in 23S rRNA + S-adenosyl-L-homocysteine + H(+). In terms of biological role, specifically methylates the adenine in position 1618 of 23S rRNA. The sequence is that of Ribosomal RNA large subunit methyltransferase F from Shigella flexneri serotype 5b (strain 8401).